We begin with the raw amino-acid sequence, 219 residues long: Histone H1.4 (219 aa).

Low complexity predominate over residues 1–15; it reads MSETAPAAPAAPAPA. The tract at residues 1–41 is disordered; that stretch reads MSETAPAAPAAPAPAEKTPVKKKARKSAGAAKRKASGPPVS. S2 is subject to N-acetylserine. A Phosphoserine modification is found at S2. N6-acetyllysine is present on K17. T18 bears the Phosphothreonine mark. A compositionally biased stretch (basic residues) spans 20 to 35; the sequence is VKKKARKSAGAAKRKA. Position 26 is an N6-acetyllysine; alternate (K26). K26 bears the N6-methyllysine; alternate mark. At K34 the chain carries N6-(beta-hydroxybutyryl)lysine; alternate. N6-succinyllysine; alternate is present on K34. Phosphoserine is present on S36. Positions 36-109 constitute an H15 domain; sequence SGPPVSELIT…GASGSFKLNK (74 aa). K52 is modified (N6-(beta-hydroxybutyryl)lysine). Residue R54 is modified to Citrulline. An N6-(beta-hydroxybutyryl)lysine mark is found at K64, K85, K90, and K106. Residues 91-219 form a disordered region; that stretch reads GTLVQTKGTG…KPKKAPAKKK (129 aa). Basic residues predominate over residues 119-140; that stretch reads KPKKAGAAKPKKPAGAAKKPKK. Position 146 is a phosphothreonine (T146). Basic residues-rich tracts occupy residues 149-160 and 168-185; these read KGAKKTPKKAKK and KKAK…KKAP. The residue at position 187 (S187) is a Phosphoserine. Positions 192–219 are enriched in basic residues; it reads KAVKPKAAKPKAAKPKTAKPKKAPAKKK.

It belongs to the histone H1/H5 family. In terms of processing, H1 histones are progressively phosphorylated during the cell cycle, becoming maximally phosphorylated during late G2 phase and M phase, and being dephosphorylated sharply thereafter. Acetylated at Lys-26. Deacetylated at Lys-26 by SIRT1. Post-translationally, citrullination at Arg-54 (H1R54ci) by PADI4 takes place within the DNA-binding site of H1 and results in its displacement from chromatin and global chromatin decondensation, thereby promoting pluripotency and stem cell maintenance.

Its subcellular location is the nucleus. It localises to the chromosome. Functionally, histone H1 protein binds to linker DNA between nucleosomes forming the macromolecular structure known as the chromatin fiber. Histones H1 are necessary for the condensation of nucleosome chains into higher-order structured fibers. Also acts as a regulator of individual gene transcription through chromatin remodeling, nucleosome spacing and DNA methylation. The sequence is that of Histone H1.4 from Oryctolagus cuniculus (Rabbit).